The primary structure comprises 471 residues: MKIKTRFAPSPTGYLHVGGARTALYSWLFARNHGGEFVLRIEDTDLERSTPEAIEAIMDGMNWLSLEWDEGPYYQTKRFDRYNAVIDQMLEEGTAYKCYCSKERLEALREEQMAKGEKPRYDGRCRHSHEHHADDEPCVVRFANPQEGSVVFDDQIRGPIEFSNQELDDLIIRRTDGSPTYNFCVVVDDWDMEITHVIRGEDHINNTPRQINILKALKAPVPVYAHVSMINGDDGKKLSKRHGAVSVMQYRDDGYLPEALLNYLVRLGWSHGDQEIFTREEMIKYFTLNAVSKSASAFNTDKLLWLNHHYINALPPEYVATHLQWHIEQENIDTRNGPQLADLVKLLGERCKTLKEMSQSCRYFYEDFAEFDADAAKKHLRPVARQPLEVVRDKLAAITDWTAENVHHAIQATADELEVGMGKVGMPLRVAVTGAGQSPALDVTVHAIGKTRSIERINKALDFIAERENQQ.

A 'HIGH' region motif is present at residues 9–19; sequence PSPTGYLHVGG. The Zn(2+) site is built by C98, C100, C125, and H127. Positions 237–241 match the 'KMSKS' region motif; it reads KLSKR. K240 is a binding site for ATP.

Belongs to the class-I aminoacyl-tRNA synthetase family. Glutamate--tRNA ligase type 1 subfamily. Monomer. Zn(2+) is required as a cofactor.

It localises to the cytoplasm. The catalysed reaction is tRNA(Glu) + L-glutamate + ATP = L-glutamyl-tRNA(Glu) + AMP + diphosphate. Its function is as follows. Catalyzes the attachment of glutamate to tRNA(Glu) in a two-step reaction: glutamate is first activated by ATP to form Glu-AMP and then transferred to the acceptor end of tRNA(Glu). In Escherichia coli (strain ATCC 8739 / DSM 1576 / NBRC 3972 / NCIMB 8545 / WDCM 00012 / Crooks), this protein is Glutamate--tRNA ligase.